We begin with the raw amino-acid sequence, 420 residues long: Probable acetate kinase (420 aa).

Mg(2+) is bound at residue Asn10. Lys17 is an ATP binding site. A substrate-binding site is contributed by Arg97. Asp153 (proton donor/acceptor) is an active-site residue. 213 to 217 (HIGSG) provides a ligand contact to ATP. Glu403 is a Mg(2+) binding site.

This sequence belongs to the acetokinase family. Mg(2+) serves as cofactor.

The catalysed reaction is acetate + ATP = acetyl phosphate + ADP. It participates in metabolic intermediate biosynthesis; acetyl-CoA biosynthesis; acetyl-CoA from acetate: step 1/2. This is Probable acetate kinase from Emericella nidulans (strain FGSC A4 / ATCC 38163 / CBS 112.46 / NRRL 194 / M139) (Aspergillus nidulans).